We begin with the raw amino-acid sequence, 655 residues long: HDA1 complex subunit 3 (655 aa).

Residues histidine 482 to threonine 632 are a coiled coil. The tract at residues arginine 635–valine 655 is disordered. The segment covering threonine 643–valine 655 has biased composition (basic residues).

Belongs to the HDA2/3 family. HDA3 subfamily. Heterodimer with HDA2. Component of the HDA1 histone deacetylase complex composed of at least one HDA1 homodimer and one HDA2/HDA3 heterodimer. Interacts with HDA1 and HDA3.

The protein localises to the nucleus. Its function is as follows. Required for activity of HDA1 histone deacetylase complex. The HDA1 histone deacetylase complex is responsible for the deacetylation of lysine residues on the N-terminal part of the core histones (H2A, H2B, H3 and H4). Histone deacetylation gives a tag for epigenetic repression and plays an important role in transcriptional regulation, cell cycle progression and developmental events. This is HDA1 complex subunit 3 (HDA3) from Saccharomyces cerevisiae (strain ATCC 204508 / S288c) (Baker's yeast).